Reading from the N-terminus, the 446-residue chain is MITIKKGLDLPIAGKPEQVIHNGNAVKEVALLGEEYVGMRPSMKVREGDVVKKGQVLFEDKKNPGIVFTAPASGTVTAINRGAKRVLQSVVIKVEGNEQITFTQYNEDELKKLTSEQVRQNLQSSGLWTALRTRPFSKVPASDAVPSSIFVNAMDTNPLSANPEIVLKEHWQDFTDGLTVLSRLHEGKLHLCKAGDSNIPTIDLPNLAVHDFSGPHPAGLSGTHIHFIDPVSATKSVWYLNYQDVIAIGKLFTTGEIYTDRVVSLAGPQVKNPRLIRTQLGANLSHLTENELSAGENRVISGSVLSGNTAIGPYNYLGRYALQVSVIAEGREKEFLGWIMPGKNKFSITRTVLGHFSSKLFNFTSAVNGGHRAMVPIGAYERVVPLDIIPTLLLRDLASGDTDSAQALGCLELDEEDLALCTFVCPGKNEYGPMLRAALDKIEKEG.

It belongs to the NqrA family. As to quaternary structure, composed of six subunits; NqrA, NqrB, NqrC, NqrD, NqrE and NqrF.

It carries out the reaction a ubiquinone + n Na(+)(in) + NADH + H(+) = a ubiquinol + n Na(+)(out) + NAD(+). Its function is as follows. NQR complex catalyzes the reduction of ubiquinone-1 to ubiquinol by two successive reactions, coupled with the transport of Na(+) ions from the cytoplasm to the periplasm. NqrA to NqrE are probably involved in the second step, the conversion of ubisemiquinone to ubiquinol. This is Na(+)-translocating NADH-quinone reductase subunit A from Histophilus somni (strain 2336) (Haemophilus somnus).